We begin with the raw amino-acid sequence, 263 residues long: Endonuclease 8 (263 aa).

Catalysis depends on proline 2, which acts as the Schiff-base intermediate with DNA. Residue glutamate 3 is the Proton donor of the active site. Residue lysine 53 is the Proton donor; for beta-elimination activity of the active site. Residues glutamine 70, arginine 125, and asparagine 169 each coordinate DNA. The FPG-type zinc finger occupies 229 to 263 (KVFHRDGELCERCGGIIEKTTLSSRPFYWCPGCQH). Arginine 253 serves as the catalytic Proton donor; for delta-elimination activity.

Belongs to the FPG family. Requires Zn(2+) as cofactor.

It catalyses the reaction 2'-deoxyribonucleotide-(2'-deoxyribose 5'-phosphate)-2'-deoxyribonucleotide-DNA = a 3'-end 2'-deoxyribonucleotide-(2,3-dehydro-2,3-deoxyribose 5'-phosphate)-DNA + a 5'-end 5'-phospho-2'-deoxyribonucleoside-DNA + H(+). Involved in base excision repair of DNA damaged by oxidation or by mutagenic agents. Acts as a DNA glycosylase that recognizes and removes damaged bases. Has a preference for oxidized pyrimidines, such as thymine glycol, 5,6-dihydrouracil and 5,6-dihydrothymine. Has AP (apurinic/apyrimidinic) lyase activity and introduces nicks in the DNA strand. Cleaves the DNA backbone by beta-delta elimination to generate a single-strand break at the site of the removed base with both 3'- and 5'-phosphates. This Escherichia coli (strain SE11) protein is Endonuclease 8.